The primary structure comprises 235 residues: 5'-methylthioadenosine/S-adenosylhomocysteine nucleosidase (235 aa).

The active-site Proton acceptor is E12. Substrate is bound by residues G78, I152, and 173–174 (ME). Catalysis depends on D197, which acts as the Proton donor.

Belongs to the PNP/UDP phosphorylase family. MtnN subfamily. As to quaternary structure, homodimer.

It catalyses the reaction S-adenosyl-L-homocysteine + H2O = S-(5-deoxy-D-ribos-5-yl)-L-homocysteine + adenine. The enzyme catalyses S-methyl-5'-thioadenosine + H2O = 5-(methylsulfanyl)-D-ribose + adenine. It carries out the reaction 5'-deoxyadenosine + H2O = 5-deoxy-D-ribose + adenine. Its pathway is amino-acid biosynthesis; L-methionine biosynthesis via salvage pathway; S-methyl-5-thio-alpha-D-ribose 1-phosphate from S-methyl-5'-thioadenosine (hydrolase route): step 1/2. Catalyzes the irreversible cleavage of the glycosidic bond in both 5'-methylthioadenosine (MTA) and S-adenosylhomocysteine (SAH/AdoHcy) to adenine and the corresponding thioribose, 5'-methylthioribose and S-ribosylhomocysteine, respectively. Also cleaves 5'-deoxyadenosine, a toxic by-product of radical S-adenosylmethionine (SAM) enzymes, into 5-deoxyribose and adenine. Thus, is required for in vivo function of the radical SAM enzymes biotin synthase and lipoic acid synthase, that are inhibited by 5'-deoxyadenosine accumulation. This is 5'-methylthioadenosine/S-adenosylhomocysteine nucleosidase from Proteus mirabilis (strain HI4320).